Consider the following 149-residue polypeptide: Nucleoside diphosphate kinase (149 aa).

Positions 9, 57, 85, 91, 102, and 112 each coordinate ATP. Histidine 115 acts as the Pros-phosphohistidine intermediate in catalysis.

This sequence belongs to the NDK family. Homotetramer. Mg(2+) is required as a cofactor.

It localises to the cytoplasm. The enzyme catalyses a 2'-deoxyribonucleoside 5'-diphosphate + ATP = a 2'-deoxyribonucleoside 5'-triphosphate + ADP. It carries out the reaction a ribonucleoside 5'-diphosphate + ATP = a ribonucleoside 5'-triphosphate + ADP. Major role in the synthesis of nucleoside triphosphates other than ATP. The ATP gamma phosphate is transferred to the NDP beta phosphate via a ping-pong mechanism, using a phosphorylated active-site intermediate. This chain is Nucleoside diphosphate kinase, found in Staphylococcus epidermidis (strain ATCC 35984 / DSM 28319 / BCRC 17069 / CCUG 31568 / BM 3577 / RP62A).